A 780-amino-acid chain; its full sequence is Ral guanine nucleotide dissociation stimulator-like 2 (780 aa).

A disordered region spans residues 1–92; the sequence is MLPRPLRLLW…PTPPPRSSRR (92 aa). The residue at position 13 (serine 13) is a Phosphoserine. Gly residues predominate over residues 31 to 42; that stretch reads GGGPGGRGVGGG. The span at 43-65 shows a compositional bias: acidic residues; it reads QEEEEEEEEDEAPVSVWDEEEDG. The region spanning 89–213 is the N-terminal Ras-GEF domain; that stretch reads SSRRLRAGTL…GSADLIRNLR (125 aa). The Ras-GEF domain occupies 244-516; the sequence is LADHLAEQLT…HRVSCEVEPP (273 aa). Positions 596 to 613 are enriched in low complexity; that stretch reads HSLADPSHLSPPASSPRP. Disordered regions lie at residues 596-651 and 741-769; these read HSLA…GASD and TATL…PRIK. The Ras-associating domain maps to 651 to 738; it reads DCRIIRVQME…HDFLLRQRRR (88 aa). The span at 741-758 shows a compositional bias: low complexity; sequence TATLGLTSSPSASGTPPS.

As to quaternary structure, interacts with SAMD9.

Functionally, probable guanine nucleotide exchange factor. Putative effector of Ras and/or Rap. Associates with the GTP-bound form of Rap 1A and H-Ras in vitro. The sequence is that of Ral guanine nucleotide dissociation stimulator-like 2 (RGL2) from Canis lupus familiaris (Dog).